Here is a 530-residue protein sequence, read N- to C-terminus: NADH-quinone oxidoreductase subunit C/D (530 aa).

Residues 1–144 (MEEIKYIEPA…NPLRMDNEET (144 aa)) form an NADH dehydrogenase I subunit C region. The interval 171–530 (EYVVNIGPQH…LDYVVPDIDR (360 aa)) is NADH dehydrogenase I subunit D.

The protein in the N-terminal section; belongs to the complex I 30 kDa subunit family. In the C-terminal section; belongs to the complex I 49 kDa subunit family. NDH-1 is composed of 13 different subunits. Subunits NuoB, CD, E, F, and G constitute the peripheral sector of the complex.

The protein resides in the cell inner membrane. It carries out the reaction a quinone + NADH + 5 H(+)(in) = a quinol + NAD(+) + 4 H(+)(out). Its function is as follows. NDH-1 shuttles electrons from NADH, via FMN and iron-sulfur (Fe-S) centers, to quinones in the respiratory chain. The immediate electron acceptor for the enzyme in this species is believed to be a menaquinone. Couples the redox reaction to proton translocation (for every two electrons transferred, four hydrogen ions are translocated across the cytoplasmic membrane), and thus conserves the redox energy in a proton gradient. The polypeptide is NADH-quinone oxidoreductase subunit C/D (Bacteroides fragilis (strain ATCC 25285 / DSM 2151 / CCUG 4856 / JCM 11019 / LMG 10263 / NCTC 9343 / Onslow / VPI 2553 / EN-2)).